Consider the following 427-residue polypeptide: Enolase 2 (427 aa).

Q165 is a binding site for (2R)-2-phosphoglycerate. E207 serves as the catalytic Proton donor. Positions 244, 287, and 314 each coordinate Mg(2+). K339, R368, S369, and K390 together coordinate (2R)-2-phosphoglycerate. The Proton acceptor role is filled by K339.

This sequence belongs to the enolase family. In terms of assembly, component of the RNA degradosome, a multiprotein complex involved in RNA processing and mRNA degradation. Requires Mg(2+) as cofactor.

It is found in the cytoplasm. The protein localises to the secreted. It localises to the cell surface. It catalyses the reaction (2R)-2-phosphoglycerate = phosphoenolpyruvate + H2O. Its pathway is carbohydrate degradation; glycolysis; pyruvate from D-glyceraldehyde 3-phosphate: step 4/5. Functionally, catalyzes the reversible conversion of 2-phosphoglycerate (2-PG) into phosphoenolpyruvate (PEP). It is essential for the degradation of carbohydrates via glycolysis. The sequence is that of Enolase 2 from Pseudomonas syringae pv. tomato (strain ATCC BAA-871 / DC3000).